The sequence spans 193 residues: Putative manganese efflux pump MntP (193 aa).

A run of 6 helical transmembrane segments spans residues 6–26 (LLGLAVALAMDAFAVAIAVGI), 41–61 (YHFGLFQALMPIIGWALGTGI), 65–85 (TQSYAHWIAFTLLALVGANMI), 107–127 (LIILSLATSIDALAVGLSLSM), 132–152 (IWYPALIIGLVAGAFTLFGML), and 169–189 (VLGGIILWAIGLNILYDNGVF).

This sequence belongs to the MntP (TC 9.B.29) family.

It is found in the cell inner membrane. Probably functions as a manganese efflux pump. The protein is Putative manganese efflux pump MntP of Desulfotalea psychrophila (strain LSv54 / DSM 12343).